A 214-amino-acid chain; its full sequence is Protein DMP6 (214 aa).

Helical transmembrane passes span 52–72 (LANL…PICT), 83–103 (FMTA…SFTD), 143–163 (FIDF…VLFD), and 178–198 (VVEL…MVFA).

It belongs to the plant DMP1 protein family. Expressed constitutively in leaves, stems, flowers, siliques and roots (e.g. root hairs).

The protein resides in the vacuole membrane. Its function is as follows. Involved in membrane remodeling. The chain is Protein DMP6 from Arabidopsis thaliana (Mouse-ear cress).